The following is a 670-amino-acid chain: Mannosyl-oligosaccharide alpha-1,2-mannosidase IA (670 aa).

Topologically, residues 1-30 (MTGILPTYQRFVNGVPVPSISRRSFRLREK) are cytoplasmic. A helical; Signal-anchor for type II membrane protein transmembrane segment spans residues 31 to 51 (YLIVSVLLTFGIVWLGALFYL). The Lumenal segment spans residues 52 to 670 (PEFKSSNSVN…EPAHAQNNRI (619 aa)). Asparagine 61 is a glycosylation site (N-linked (GlcNAc...) asparagine). The segment at 135-177 (DVAPSVSSSRGPSKPPVDAIEEPAVGNNAANKDVSPSGPKAES) is disordered. Cysteine 480 and cysteine 512 are oxidised to a cystine. Catalysis depends on glutamate 526, which acts as the Proton donor. Threonine 637 is a binding site for Ca(2+).

The protein belongs to the glycosyl hydrolase 47 family. The cofactor is Ca(2+). N-glycosylated. Contains high mannose-type oligosaccharides.

Its subcellular location is the golgi apparatus membrane. The catalysed reaction is N(4)-(alpha-D-Man-(1-&gt;2)-alpha-D-Man-(1-&gt;2)-alpha-D-Man-(1-&gt;3)-[alpha-D-Man-(1-&gt;2)-alpha-D-Man-(1-&gt;3)-[alpha-D-Man-(1-&gt;2)-alpha-D-Man-(1-&gt;6)]-alpha-D-Man-(1-&gt;6)]-beta-D-Man-(1-&gt;4)-beta-D-GlcNAc-(1-&gt;4)-beta-D-GlcNAc)-L-asparaginyl-[protein] (N-glucan mannose isomer 9A1,2,3B1,2,3) + 4 H2O = N(4)-(alpha-D-Man-(1-&gt;3)-[alpha-D-Man-(1-&gt;3)-[alpha-D-Man-(1-&gt;6)]-alpha-D-Man-(1-&gt;6)]-beta-D-Man-(1-&gt;4)-beta-D-GlcNAc-(1-&gt;4)-beta-D-GlcNAc)-L-asparaginyl-[protein] (N-glucan mannose isomer 5A1,2) + 4 beta-D-mannose. It carries out the reaction N(4)-(alpha-D-Man-(1-&gt;2)-alpha-D-Man-(1-&gt;2)-alpha-D-Man-(1-&gt;3)-[alpha-D-Man-(1-&gt;3)-[alpha-D-Man-(1-&gt;2)-alpha-D-Man-(1-&gt;6)]-alpha-D-Man-(1-&gt;6)]-beta-D-Man-(1-&gt;4)-beta-D-GlcNAc-(1-&gt;4)-beta-D-GlcNAc)-L-asparaginyl-[protein] (N-glucan mannose isomer 8A1,2,3B1,3) + 3 H2O = N(4)-(alpha-D-Man-(1-&gt;3)-[alpha-D-Man-(1-&gt;3)-[alpha-D-Man-(1-&gt;6)]-alpha-D-Man-(1-&gt;6)]-beta-D-Man-(1-&gt;4)-beta-D-GlcNAc-(1-&gt;4)-beta-D-GlcNAc)-L-asparaginyl-[protein] (N-glucan mannose isomer 5A1,2) + 3 beta-D-mannose. Its pathway is protein modification; protein glycosylation. Strongly inhibited by 1-deoxymannojirimycin, an inhibitor of class I alpha-mannosidases, and by EDTA. EDTA inhibition is reversed by the addition of calcium, but not of magnesium. Functionally, involved in the maturation of Asn-linked oligosaccharides. Converts Man(9)GlcNAc(2) to Man(5)GlcNAc(2) primarily through the Man(7)GlcNAc(2) isomer C processing intermediate. The polypeptide is Mannosyl-oligosaccharide alpha-1,2-mannosidase IA (Spodoptera frugiperda (Fall armyworm)).